A 195-amino-acid polypeptide reads, in one-letter code: uncharacterized protein (195 aa).

Disordered stretches follow at residues 1–54 and 173–195; these read MPKG…SNKI and LAGAARGPSQTGTPVAEEAKPIS. A compositionally biased stretch (basic and acidic residues) spans 7–20; it reads KPNEKKEELEKFAK. A compositionally biased stretch (polar residues) spans 45-54; it reads QNDSSSSNKI. A coiled-coil region spans residues 48-97; that stretch reads SSSSNKIVLSQAEKDLLRTELDKTEEEISTLKQVLSARQKHAAELKRKLG.

This sequence belongs to the TPD52 family.

This is an uncharacterized protein from Caenorhabditis elegans.